We begin with the raw amino-acid sequence, 569 residues long: Glutamate--tRNA ligase, chloroplastic/mitochondrial (569 aa).

59–61 provides a ligand contact to L-glutamate; sequence RFA. The short motif at 62-72 is the 'HIGH' region element; that stretch reads PSPTGNLHVGG. H69 contacts ATP. L-glutamate is bound by residues E95, 247-251, and R265; that span reads YNFCV. Residues E268 and 303–307 contribute to the ATP site; that span reads KLSKR. Positions 303–307 match the 'KMSKS' region motif; it reads KLSKR.

The protein belongs to the class-I aminoacyl-tRNA synthetase family. Glutamate--tRNA ligase type 1 subfamily.

Its subcellular location is the plastid. It is found in the chloroplast. It localises to the mitochondrion. It carries out the reaction tRNA(Glu) + L-glutamate + ATP = L-glutamyl-tRNA(Glu) + AMP + diphosphate. Its function is as follows. Catalyzes the attachment of glutamate to tRNA(Glu) in a two-step reaction: glutamate is first activated by ATP to form Glu-AMP and then transferred to the acceptor end of tRNA(Glu). The sequence is that of Glutamate--tRNA ligase, chloroplastic/mitochondrial from Nicotiana tabacum (Common tobacco).